A 306-amino-acid polypeptide reads, in one-letter code: Aspartate carbamoyltransferase catalytic subunit (306 aa).

Residues arginine 54 and threonine 55 each contribute to the carbamoyl phosphate site. Lysine 83 provides a ligand contact to L-aspartate. Residues arginine 104, histidine 132, and glutamine 135 each contribute to the carbamoyl phosphate site. Arginine 165 and arginine 227 together coordinate L-aspartate. 2 residues coordinate carbamoyl phosphate: leucine 266 and proline 267.

It belongs to the aspartate/ornithine carbamoyltransferase superfamily. ATCase family. Heterododecamer (2C3:3R2) of six catalytic PyrB chains organized as two trimers (C3), and six regulatory PyrI chains organized as three dimers (R2).

It catalyses the reaction carbamoyl phosphate + L-aspartate = N-carbamoyl-L-aspartate + phosphate + H(+). It participates in pyrimidine metabolism; UMP biosynthesis via de novo pathway; (S)-dihydroorotate from bicarbonate: step 2/3. Its function is as follows. Catalyzes the condensation of carbamoyl phosphate and aspartate to form carbamoyl aspartate and inorganic phosphate, the committed step in the de novo pyrimidine nucleotide biosynthesis pathway. The polypeptide is Aspartate carbamoyltransferase catalytic subunit (Clostridium kluyveri (strain NBRC 12016)).